The following is a 223-amino-acid chain: Zinc-finger homeodomain protein 12 (223 aa).

Over residues 1–20 (MSSLSKPNRQFLSPTTNNQD) the composition is skewed to polar residues. The disordered stretch occupies residues 1-24 (MSSLSKPNRQFLSPTTNNQDTGRE). The ZF-HD dimerization-type; degenerate zinc-finger motif lies at 37–88 (YNECLKNHAVSLGGHALDGCGEFTPKSTTILTDPPSLRCDACGCHRNFHRRS). The homeobox; atypical DNA-binding region spans 147–204 (KKHKRTKFTAEQKVKMRGFAERAGWKINGWDEKWVREFCSEVGIERKVLKVWIHNNKY).

As to quaternary structure, homo- and heterodimer with other ZFHD proteins. Interacts with ZHD11.

It is found in the nucleus. In terms of biological role, putative transcription factor. The chain is Zinc-finger homeodomain protein 12 (ZHD12) from Arabidopsis thaliana (Mouse-ear cress).